A 308-amino-acid chain; its full sequence is Small ribosomal subunit protein uS5c (308 aa).

The transit peptide at 1–55 (MATTATTTPSATSLTTLHRRIPLFPTTTTLLSLSSSSKPLFLSLSSTRSFPTHLY) directs the protein to the chloroplast. In terms of domain architecture, S5 DRBM spans 152–215 (FEENVVQVRR…VDARRNIITV (64 aa)).

In terms of assembly, component of the chloroplast small ribosomal subunit (SSU). Mature 70S chloroplast ribosomes of higher plants consist of a small (30S) and a large (50S) subunit. The 30S small subunit contains 1 molecule of ribosomal RNA (16S rRNA) and 24 different proteins. The 50S large subunit contains 3 rRNA molecules (23S, 5S and 4.5S rRNA) and 33 different proteins. uS5c binds directly to 16S ribosomal RNA.

The protein localises to the plastid. It localises to the chloroplast. Its function is as follows. Component of the chloroplast ribosome (chloro-ribosome), a dedicated translation machinery responsible for the synthesis of chloroplast genome-encoded proteins, including proteins of the transcription and translation machinery and components of the photosynthetic apparatus. In Spinacia oleracea (Spinach), this protein is Small ribosomal subunit protein uS5c (rps5).